A 126-amino-acid polypeptide reads, in one-letter code: Large ribosomal subunit protein bL12 (126 aa).

Belongs to the bacterial ribosomal protein bL12 family. Homodimer. Part of the ribosomal stalk of the 50S ribosomal subunit. Forms a multimeric L10(L12)X complex, where L10 forms an elongated spine to which 2 to 4 L12 dimers bind in a sequential fashion. Binds GTP-bound translation factors.

Its function is as follows. Forms part of the ribosomal stalk which helps the ribosome interact with GTP-bound translation factors. Is thus essential for accurate translation. The chain is Large ribosomal subunit protein bL12 from Helicobacter hepaticus (strain ATCC 51449 / 3B1).